A 1357-amino-acid chain; its full sequence is DNA-directed RNA polymerase subunit beta (1357 aa).

It belongs to the RNA polymerase beta chain family. As to quaternary structure, the RNAP catalytic core consists of 2 alpha, 1 beta, 1 beta' and 1 omega subunit. When a sigma factor is associated with the core the holoenzyme is formed, which can initiate transcription.

It carries out the reaction RNA(n) + a ribonucleoside 5'-triphosphate = RNA(n+1) + diphosphate. In terms of biological role, DNA-dependent RNA polymerase catalyzes the transcription of DNA into RNA using the four ribonucleoside triphosphates as substrates. The polypeptide is DNA-directed RNA polymerase subunit beta (Pseudomonas putida (Arthrobacter siderocapsulatus)).